A 105-amino-acid chain; its full sequence is Circadian clock oscillator protein KaiB (105 aa).

This sequence belongs to the KaiB family. In terms of assembly, the KaiABC complex composition changes during the circadian cycle to control KaiC phosphorylation. Complexes KaiC(6), KaiA(2-4):KaiC(6), KaiB(6):KaiC(6) and KaiC(6):KaiB(6):KaiA(12) are among the most important forms, many form cooperatively. Undergoes a major conformational rearrangment; in the free state forms homotetramers as a dimer of dimers. When bound to the CI domain of KaiC switches to a monomeric thioredoxin-fold (KaiB(fs)). KaiB(fs) binds CikA, leading it to dephosphorylate phospho-RpaA.

Its function is as follows. Key component of the KaiABC oscillator complex, which constitutes the main circadian regulator in cyanobacteria. Complex composition changes during the circadian cycle to control KaiC phosphorylation. KaiA stimulates KaiC autophosphorylation, while KaiB sequesters KaiA, leading to KaiC autodephosphorylation. Phospho-Ser-431 KaiC accumulation triggers binding of KaiB to form the KaiB(6):KaiC(6) complex, leading to changes in output regulators CikA and SasA. KaiB switches to a thioredoxin-like fold (KaiB(fs)) when bound to KaiC. KaiB(6):KaiC(6) formation exposes a site for KaiA binding that sequesters KaiA from KaiC, making the KaiC(6):KaiB(6):KaiA(12) complex that results in KaiC autodephosphorylation. A metamorphic protein which reversibly switches between an inactive tetrameric fold and a rare, thioredoxin-like monomeric fold (KaiB(fs)). KaiB(fs) binds phospho-KaiC, KaiA and CikA. KaiA and CikA compete for binding to KaiB(fs), and KaiB(fs) and SasA compete for binding to KaiC, thus the clock oscillator and output signal pathway are tightly coupled. This is Circadian clock oscillator protein KaiB from Cyanothece sp. (strain PCC 7425 / ATCC 29141).